Here is a 37-residue protein sequence, read N- to C-terminus: Large ribosomal subunit protein bL36 (37 aa).

This sequence belongs to the bacterial ribosomal protein bL36 family.

This is Large ribosomal subunit protein bL36 from Geobacillus kaustophilus (strain HTA426).